Here is a 511-residue protein sequence, read N- to C-terminus: Maturase K (511 aa).

It belongs to the intron maturase 2 family. MatK subfamily.

The protein resides in the plastid. The protein localises to the chloroplast. In terms of biological role, usually encoded in the trnK tRNA gene intron. Probably assists in splicing its own and other chloroplast group II introns. The chain is Maturase K from Brachypodium distachyon (Purple false brome).